The primary structure comprises 316 residues: Biotin synthase (316 aa).

The region spanning N36–A260 is the Radical SAM core domain. [4Fe-4S] cluster contacts are provided by C51, C55, and C58. [2Fe-2S] cluster contacts are provided by C95, C126, C186, and R258.

It belongs to the radical SAM superfamily. Biotin synthase family. As to quaternary structure, homodimer. The cofactor is [4Fe-4S] cluster. [2Fe-2S] cluster serves as cofactor.

The enzyme catalyses (4R,5S)-dethiobiotin + (sulfur carrier)-SH + 2 reduced [2Fe-2S]-[ferredoxin] + 2 S-adenosyl-L-methionine = (sulfur carrier)-H + biotin + 2 5'-deoxyadenosine + 2 L-methionine + 2 oxidized [2Fe-2S]-[ferredoxin]. Its pathway is cofactor biosynthesis; biotin biosynthesis; biotin from 7,8-diaminononanoate: step 2/2. Functionally, catalyzes the conversion of dethiobiotin (DTB) to biotin by the insertion of a sulfur atom into dethiobiotin via a radical-based mechanism. The polypeptide is Biotin synthase (Lawsonia intracellularis (strain PHE/MN1-00)).